Reading from the N-terminus, the 264-residue chain is Thymidylate synthase (264 aa).

Arg21 serves as a coordination point for dUMP. His51 is a (6R)-5,10-methylene-5,6,7,8-tetrahydrofolate binding site. 126 to 127 (RR) contributes to the dUMP binding site. Cys146 serves as the catalytic Nucleophile. Residues 166-169 (RSAD), Asn177, and 207-209 (HLY) each bind dUMP. Asp169 lines the (6R)-5,10-methylene-5,6,7,8-tetrahydrofolate pocket. Residue Ala263 coordinates (6R)-5,10-methylene-5,6,7,8-tetrahydrofolate.

The protein belongs to the thymidylate synthase family. Bacterial-type ThyA subfamily. In terms of assembly, homodimer.

It localises to the cytoplasm. The catalysed reaction is dUMP + (6R)-5,10-methylene-5,6,7,8-tetrahydrofolate = 7,8-dihydrofolate + dTMP. The protein operates within pyrimidine metabolism; dTTP biosynthesis. Catalyzes the reductive methylation of 2'-deoxyuridine-5'-monophosphate (dUMP) to 2'-deoxythymidine-5'-monophosphate (dTMP) while utilizing 5,10-methylenetetrahydrofolate (mTHF) as the methyl donor and reductant in the reaction, yielding dihydrofolate (DHF) as a by-product. This enzymatic reaction provides an intracellular de novo source of dTMP, an essential precursor for DNA biosynthesis. The sequence is that of Thymidylate synthase from Bartonella tribocorum (strain CIP 105476 / IBS 506).